A 103-amino-acid polypeptide reads, in one-letter code: MARSICFFAVAILALMLFAAYDAEAATCKAECPTWDSVCINKKPCVACCKKAKFSDGHCSKILRRCLCTKECVFEKTEATQTETFTKDVNTLAEALLEADMMV.

The first 25 residues, 1 to 25 (MARSICFFAVAILALMLFAAYDAEA), serve as a signal peptide directing secretion. Cystine bridges form between cysteine 28-cysteine 72, cysteine 32-cysteine 48, cysteine 39-cysteine 59, cysteine 45-cysteine 66, and cysteine 49-cysteine 68. Positions 73–103 (VFEKTEATQTETFTKDVNTLAEALLEADMMV) are cleaved as a propeptide — removed in mature form.

Belongs to the DEFL family. When compared to other plant defensins, the petunia defensins have an additional fifth disulfide bond. Petals.

It is found in the secreted. Its subcellular location is the vacuole. Functionally, plant defense peptide with antifungal activity against F.oxysporum and B.cinerea. The chain is Floral defensin-like protein 1 (D1) from Petunia hybrida (Petunia).